The chain runs to 365 residues: tRNA(Met) cytidine acetate ligase (365 aa).

Residues 7–20 (IAEF…HKYL), Gly96, Asn152, and Arg175 contribute to the ATP site.

It belongs to the TmcAL family.

Its subcellular location is the cytoplasm. The catalysed reaction is cytidine(34) in elongator tRNA(Met) + acetate + ATP = N(4)-acetylcytidine(34) in elongator tRNA(Met) + AMP + diphosphate. Catalyzes the formation of N(4)-acetylcytidine (ac(4)C) at the wobble position of elongator tRNA(Met), using acetate and ATP as substrates. First activates an acetate ion to form acetyladenylate (Ac-AMP) and then transfers the acetyl group to tRNA to form ac(4)C34. The sequence is that of tRNA(Met) cytidine acetate ligase from Streptococcus pneumoniae (strain ATCC BAA-255 / R6).